We begin with the raw amino-acid sequence, 94 residues long: Large ribosomal subunit protein uL23 (94 aa).

It belongs to the universal ribosomal protein uL23 family. As to quaternary structure, part of the 50S ribosomal subunit. Contacts protein L29, and trigger factor when it is bound to the ribosome.

One of the early assembly proteins it binds 23S rRNA. One of the proteins that surrounds the polypeptide exit tunnel on the outside of the ribosome. Forms the main docking site for trigger factor binding to the ribosome. This Geobacter sp. (strain M21) protein is Large ribosomal subunit protein uL23.